A 317-amino-acid chain; its full sequence is Olfactory receptor-like protein OLF3 (317 aa).

Residues 1–25 (MGTGNQTWVREFVLLGLSSDWDTEV) lie on the Extracellular side of the membrane. Asn-5 is a glycosylation site (N-linked (GlcNAc...) asparagine). A helical transmembrane segment spans residues 26 to 49 (SLFVLFLITYMVTVLGNFLIILLI). Residues 50–57 (RLDSRLHT) lie on the Cytoplasmic side of the membrane. The helical transmembrane segment at 58 to 79 (PMYFFLTNLSLVDVSYATSIIP) threads the bilayer. Topologically, residues 80-100 (QMLAHLLAAHKAIPFVSCAAQ) are extracellular. Residues 101-120 (LFFSLGLGGIEFVLLAVMAY) traverse the membrane as a helical segment. Residues 121–139 (DRYVAVCDPLRYSVIMHGG) are Cytoplasmic-facing. The helical transmembrane segment at 140–158 (LCTRLAITSWVSGSMNSLM) threads the bilayer. At 159 to 196 (QTVITFQLPMCTNKYIDHISCELLAVVRLACVDTSSNE) the chain is on the extracellular side. Residues 197-219 (IAIMVSSIVLLMTPFCLVLLSYI) form a helical membrane-spanning segment. The Cytoplasmic portion of the chain corresponds to 220–236 (QIISTILKIQSTEGRKK). A helical membrane pass occupies residues 237–260 (AFHTCASHLTVVVLCYGMAIFTYI). Residues 261-272 (QPRSSPSVLQEK) are Extracellular-facing. Residues 273-292 (LISLFYSVLTPMLNPMIYSV) traverse the membrane as a helical segment. The Cytoplasmic segment spans residues 293–317 (RNKEVKGAWQKLLGQLTGITSKLAT).

This sequence belongs to the G-protein coupled receptor 1 family.

The protein resides in the cell membrane. Its function is as follows. Putative odorant or sperm cell receptor. The protein is Olfactory receptor-like protein OLF3 of Canis lupus familiaris (Dog).